Reading from the N-terminus, the 291-residue chain is Undecaprenyl-diphosphatase (291 aa).

The next 8 helical transmembrane spans lie at Met-1–Phe-21, Ser-48–Phe-68, Leu-99–Ile-119, Leu-123–Ala-143, Ile-159–Phe-179, Ser-200–Val-220, Leu-236–Ile-256, and Ile-269–Thr-289.

This sequence belongs to the UppP family.

Its subcellular location is the cell membrane. It carries out the reaction di-trans,octa-cis-undecaprenyl diphosphate + H2O = di-trans,octa-cis-undecaprenyl phosphate + phosphate + H(+). Catalyzes the dephosphorylation of undecaprenyl diphosphate (UPP). Confers resistance to bacitracin. The sequence is that of Undecaprenyl-diphosphatase from Staphylococcus saprophyticus subsp. saprophyticus (strain ATCC 15305 / DSM 20229 / NCIMB 8711 / NCTC 7292 / S-41).